Here is an 89-residue protein sequence, read N- to C-terminus: UPF0298 protein GK1096 (89 aa).

The protein belongs to the UPF0298 family.

It localises to the cytoplasm. This is UPF0298 protein GK1096 from Geobacillus kaustophilus (strain HTA426).